Reading from the N-terminus, the 319-residue chain is Aspartate carbamoyltransferase catalytic subunit (319 aa).

Residues Arg65 and Thr66 each coordinate carbamoyl phosphate. Position 93 (Lys93) interacts with L-aspartate. 3 residues coordinate carbamoyl phosphate: Arg115, His149, and Gln152. 2 residues coordinate L-aspartate: Arg182 and Arg237. Carbamoyl phosphate contacts are provided by Gly278 and Pro279.

The protein belongs to the aspartate/ornithine carbamoyltransferase superfamily. ATCase family. In terms of assembly, heterododecamer (2C3:3R2) of six catalytic PyrB chains organized as two trimers (C3), and six regulatory PyrI chains organized as three dimers (R2).

The enzyme catalyses carbamoyl phosphate + L-aspartate = N-carbamoyl-L-aspartate + phosphate + H(+). It participates in pyrimidine metabolism; UMP biosynthesis via de novo pathway; (S)-dihydroorotate from bicarbonate: step 2/3. Catalyzes the condensation of carbamoyl phosphate and aspartate to form carbamoyl aspartate and inorganic phosphate, the committed step in the de novo pyrimidine nucleotide biosynthesis pathway. In Azoarcus sp. (strain BH72), this protein is Aspartate carbamoyltransferase catalytic subunit.